We begin with the raw amino-acid sequence, 967 residues long: Importin-alpha re-exporter (967 aa).

The region spanning 20-95 (AEEALKVWEL…KREIINLMLK (76 aa)) is the Importin N-terminal domain.

It belongs to the XPO2/CSE1 family. In terms of assembly, binds with high affinity to importin-alpha only in the presence of RanGTP.

The protein resides in the cytoplasm. The protein localises to the nucleus envelope. Export receptor for importin alpha. Mediates importin-alpha re-export from the nucleus to the cytoplasm after import substrates have been released into the nucleoplasm. This Schizosaccharomyces pombe (strain 972 / ATCC 24843) (Fission yeast) protein is Importin-alpha re-exporter (kap109).